Here is a 453-residue protein sequence, read N- to C-terminus: Carbamoyl phosphate synthase arginine-specific small chain (453 aa).

A mitochondrion-targeting transit peptide spans 1–28 (MFARVFKAMPARASALTSVNASIQARFM). The region spanning 219–406 (HVAVIDCGVK…IDSVKKYKAS (188 aa)) is the Glutamine amidotransferase type-1 domain. Catalysis depends on C295, which acts as the Nucleophile. Catalysis depends on residues H379 and E381.

This sequence belongs to the CarA family. Heterodimer composed of 2 chains; the small (or glutamine) chain promotes the hydrolysis of glutamine to ammonia, which is used by the large (or ammonia) chain to synthesize carbamoyl phosphate.

It is found in the mitochondrion matrix. The catalysed reaction is hydrogencarbonate + L-glutamine + 2 ATP + H2O = carbamoyl phosphate + L-glutamate + 2 ADP + phosphate + 2 H(+). It catalyses the reaction L-glutamine + H2O = L-glutamate + NH4(+). Its pathway is amino-acid biosynthesis; L-arginine biosynthesis; carbamoyl phosphate from bicarbonate: step 1/1. Its function is as follows. Small subunit of the arginine-specific carbamoyl phosphate synthase (CPSase). CPSase catalyzes the formation of carbamoyl phosphate from the ammonia moiety of glutamine, carbonate, and phosphate donated by ATP, the first step of the arginine biosynthetic pathway. The small subunit (glutamine amidotransferase) binds and cleaves glutamine to supply the large subunit with the substrate ammonia. The chain is Carbamoyl phosphate synthase arginine-specific small chain (cpa1) from Neosartorya fischeri (strain ATCC 1020 / DSM 3700 / CBS 544.65 / FGSC A1164 / JCM 1740 / NRRL 181 / WB 181) (Aspergillus fischerianus).